A 200-amino-acid polypeptide reads, in one-letter code: MLIAVVGKAGVGKTTVLQYIADYFHFPVFFADRFIHQQYANGQAGYAIVKQQFGAQFVNHEAVDRKQLAQYVFNQPDELKRLSNLTKPLVQEWLNQLKAQFQDKIALVEIAVMLNYWNDYRPFFDEVIQIERDAKIVKQALKARGVDVEQVQKLIADPTYPILTVINNSTVAECALHVTQFLESIAKSDKCHHGHYQTPK.

The DPCK domain maps to 2–200 (LIAVVGKAGV…CHHGHYQTPK (199 aa)). 10 to 15 (GVGKTT) contacts ATP.

Belongs to the CoaE family.

It localises to the cytoplasm. The catalysed reaction is 3'-dephospho-CoA + ATP = ADP + CoA + H(+). It participates in cofactor biosynthesis; coenzyme A biosynthesis; CoA from (R)-pantothenate: step 5/5. Functionally, catalyzes the phosphorylation of the 3'-hydroxyl group of dephosphocoenzyme A to form coenzyme A. In Mycoplasma pneumoniae (strain ATCC 29342 / M129 / Subtype 1) (Mycoplasmoides pneumoniae), this protein is Dephospho-CoA kinase.